A 137-amino-acid chain; its full sequence is uncharacterized protein (137 aa).

The protein belongs to the DCC thiol-disulfide oxidoreductase family.

This is an uncharacterized protein from Bacillus subtilis (strain 168).